Consider the following 296-residue polypeptide: Arginase (296 aa).

Residues H98, D124, H126, and D128 each coordinate Mn(2+). Residues N130, S137, and D178 each contribute to the L-arginine site. D225 and D227 together coordinate Mn(2+). The L-arginine site is built by D227 and T239.

Belongs to the arginase family. As to quaternary structure, monomer. Homodimer; dimerization is dispensable for catalytic activity. Requires Mn(2+) as cofactor.

It catalyses the reaction L-arginine + H2O = urea + L-ornithine. The protein operates within nitrogen metabolism; urea cycle; L-ornithine and urea from L-arginine: step 1/1. With respect to regulation, substitution of the loosely bound surface exposed Mn(2+) with Mg(2+), Zn(2+), Ni(2+) or Co(2+) results in similar catalytic activity, substitution with Cd(2+) and Cu(2+) reduces catalytic activity and substitution with Hg(2+) and Ca(2+) inhibits the enzyme. Inhibited by L-norvaline. Catalyzes the hydrolysis of L-arginine into urea and L-ornithine, which is a precursor for polyamine biosynthesis. By depleting host L-arginine, a substrate for nitric oxide synthase (NOS), prevents the production of nitric oxide (NO) by host activated macrophages, and thus allows the parasite to evade host immune response. The sequence is that of Arginase from Entamoeba histolytica (strain ATCC 30459 / HM-1:IMSS / ABRM).